Reading from the N-terminus, the 79-residue chain is Acyl carrier protein (79 aa).

The 76-residue stretch at 3 to 78 (QEILEKVCSI…DAVKFIEEKK (76 aa)) folds into the Carrier domain. An O-(pantetheine 4'-phosphoryl)serine modification is found at S38.

The protein belongs to the acyl carrier protein (ACP) family. Post-translationally, 4'-phosphopantetheine is transferred from CoA to a specific serine of apo-ACP by AcpS. This modification is essential for activity because fatty acids are bound in thioester linkage to the sulfhydryl of the prosthetic group.

Its subcellular location is the cytoplasm. Its pathway is lipid metabolism; fatty acid biosynthesis. Functionally, carrier of the growing fatty acid chain in fatty acid biosynthesis. This Prochlorococcus marinus (strain MIT 9301) protein is Acyl carrier protein.